Consider the following 230-residue polypeptide: Ribonuclease 3 (230 aa).

The region spanning Glu-5–Gly-134 is the RNase III domain. Glu-47 serves as a coordination point for Mg(2+). Residue Asp-51 is part of the active site. 2 residues coordinate Mg(2+): Asp-120 and Glu-123. The active site involves Glu-123. The region spanning Asp-160–Glu-229 is the DRBM domain.

The protein belongs to the ribonuclease III family. As to quaternary structure, homodimer. The cofactor is Mg(2+).

The protein resides in the cytoplasm. The enzyme catalyses Endonucleolytic cleavage to 5'-phosphomonoester.. Digests double-stranded RNA. Involved in the processing of primary rRNA transcript to yield the immediate precursors to the large and small rRNAs (23S and 16S). Processes some mRNAs, and tRNAs when they are encoded in the rRNA operon. Processes pre-crRNA and tracrRNA of type II CRISPR loci if present in the organism. This is Ribonuclease 3 from Streptococcus uberis (strain ATCC BAA-854 / 0140J).